The primary structure comprises 214 residues: ER lumen protein-retaining receptor 3 (214 aa).

Residues 1 to 4 (MNVF) lie on the Lumenal side of the membrane. The chain crosses the membrane as a helical span at residues 5-24 (RILGDLSHLLAMILLLVKIW). At 25-32 (RSKSCAGI) the chain is on the cytoplasmic side. A helical transmembrane segment spans residues 33 to 52 (SGKSQILFALVFTTRYLDLF). Positions 47 to 48 (RY) are interaction with the K-D-E-L motif on target proteins. At 53-58 (SNFISI) the chain is on the lumenal side. Residues 59 to 79 (YNTVMKVVFLLCAYVTVYMIY) traverse the membrane as a helical segment. Residues 80–92 (WKFRKTFDIENDT) are Cytoplasmic-facing. Residues 93 to 110 (FRLEFLLVPVTGLSFLVN) traverse the membrane as a helical segment. Residues 111–116 (YSYTPM) are Lumenal-facing. Residues 117-135 (EVLWTFSIYLESVAILPQL) form a helical membrane-spanning segment. Topologically, residues 136 to 149 (FMISKTGEAETITT) are cytoplasmic. Residues 150-168 (HYLFFLGLYRLLYLANWIR) traverse the membrane as a helical segment. Positions 159-169 (RLLYLANWIRR) are interaction with the K-D-E-L motif on target proteins. At 169–178 (RYQTENFYDQ) the chain is on the lumenal side. Residues 179–199 (ISVVSGVVQTIFYCDFFYLYV) form a helical membrane-spanning segment. The Cytoplasmic segment spans residues 200–214 (TKVLKGKKLSLPVPV). The segment at 204–207 (KGKK) is important for recycling of cargo proteins with the sequence motif K-D-E-L from the Golgi to the endoplasmic reticulum.

The protein belongs to the ERD2 family.

The protein resides in the endoplasmic reticulum membrane. It is found in the golgi apparatus membrane. Its subcellular location is the cytoplasmic vesicle. It localises to the COPI-coated vesicle membrane. Its function is as follows. Receptor for the C-terminal sequence motif K-D-E-L that is present on endoplasmic reticulum resident proteins and that mediates their recycling from the Golgi back to the endoplasmic reticulum. The sequence is that of ER lumen protein-retaining receptor 3 (Kdelr3) from Mus musculus (Mouse).